Reading from the N-terminus, the 83-residue chain is MENDAGENVDLYVPRKCSASNRIIHAKDHASVQLSIVDVDPETGRQTDGSKTYAICGEIRRMGESDDCIVRLAKKDGIITKNF.

Belongs to the eukaryotic ribosomal protein eS21 family. As to quaternary structure, component of the 40S small ribosomal subunit. Interacts with sta.

It is found in the cytoplasm. The protein localises to the cytosol. Its subcellular location is the rough endoplasmic reticulum. May be an associated component of the ribosome rather than a core structural subunit. May act as a translation initiation factor. Has a role in regulation of cell proliferation in the hematopoietic organs and the imaginal disks of larva. The chain is Small ribosomal subunit protein eS21 (RpS21) from Drosophila erecta (Fruit fly).